A 295-amino-acid chain; its full sequence is Protoheme IX farnesyltransferase 2 (295 aa).

Transmembrane regions (helical) follow at residues Ile9–Ala29, Phe36–Phe56, Leu83–Val103, Leu108–Leu128, Gly135–Ser155, Val163–Phe183, Ile209–Ala229, Gly230–Gly250, and Val264–Gln284.

It belongs to the UbiA prenyltransferase family. Protoheme IX farnesyltransferase subfamily.

Its subcellular location is the cell inner membrane. It catalyses the reaction heme b + (2E,6E)-farnesyl diphosphate + H2O = Fe(II)-heme o + diphosphate. It functions in the pathway porphyrin-containing compound metabolism; heme O biosynthesis; heme O from protoheme: step 1/1. In terms of biological role, converts heme B (protoheme IX) to heme O by substitution of the vinyl group on carbon 2 of heme B porphyrin ring with a hydroxyethyl farnesyl side group. The protein is Protoheme IX farnesyltransferase 2 of Pseudomonas putida (strain GB-1).